We begin with the raw amino-acid sequence, 317 residues long: tRNA dimethylallyltransferase (317 aa).

ATP is bound at residue 14–21 (GPTASGKT). 16–21 (TASGKT) contributes to the substrate binding site. Interaction with substrate tRNA regions lie at residues 39–42 (DSAL) and 163–167 (QRIQR).

Belongs to the IPP transferase family. In terms of assembly, monomer. Requires Mg(2+) as cofactor.

It catalyses the reaction adenosine(37) in tRNA + dimethylallyl diphosphate = N(6)-dimethylallyladenosine(37) in tRNA + diphosphate. Catalyzes the transfer of a dimethylallyl group onto the adenine at position 37 in tRNAs that read codons beginning with uridine, leading to the formation of N6-(dimethylallyl)adenosine (i(6)A). The sequence is that of tRNA dimethylallyltransferase from Stenotrophomonas maltophilia (strain K279a).